The following is a 1736-amino-acid chain: Centrosomal protein of 152 kDa (1736 aa).

The segment at 1-60 (MSLEFGSVALQTQNEDEEFDKEDFEREKELQQLLTDLPHDMLDDELSSPERHDSDCSMDG) is interaction with PLK4. Positions 1–127 (MSLEFGSVAL…SGYSPPGKRE (127 aa)) are disordered. Composition is skewed to basic and acidic residues over residues 61–82 (RAAEPHPSEHLERKWIERDILP) and 94–105 (EENRSKTEDQHL). 6 coiled-coil regions span residues 228–481 (IIQL…AELG), 552–651 (HLVS…QEFD), 692–776 (LEVY…TERQ), 835–868 (AAVSKAEAAAVLAEEQARQVQQEKELATKEALRK), 950–1075 (NVMS…YEED), and 1205–1315 (GHCF…KIKR). Residues 571–592 (FQQSKDGDSGMETKTDTSEKTT) form a disordered region. Basic and acidic residues predominate over residues 575 to 592 (KDGDSGMETKTDTSEKTT). Threonine 1277 carries the phosphothreonine modification. Disordered stretches follow at residues 1416–1479 (GTER…ASTA), 1543–1562 (EKNSSPRCISESRHTTLRSP), 1574–1614 (GSPT…SDST), and 1677–1736 (QQGK…SPLE). Basic and acidic residues predominate over residues 1462-1473 (RRLEESKHREMR). Composition is skewed to polar residues over residues 1576–1595 (PTETDSIASEKSQGVGSQDS) and 1603–1614 (PSSSPAWPSDST). Lysine 1714 carries the N6-acetyllysine modification.

It belongs to the CEP152 family. As to quaternary structure, interacts (via N-terminus) with PLK4; the interaction is mutally exclusive with a PLK4:CEP192 interaction. Interacts (via C-terminus) with CPAP (via-N-terminus). Interacts with CINP. Interacts with CDK5RAP2, WDR62, CEP63 and CEP131. CEP63, CDK5RAP2, CEP152, WDR62 are proposed to form a stepwise assembled complex at the centrosome forming a ring near parental centrioles. Interacts with DEUP1; this interaction recruits CEP152 to the deuterosome. The interactions with CEP63 and DEUP1 are mutually exclusive. Interacts with CCDC66.

The protein resides in the cytoplasm. It is found in the cytoskeleton. It localises to the microtubule organizing center. The protein localises to the centrosome. Its subcellular location is the centriole. In terms of biological role, necessary for centrosome duplication; the function also seems to involve CEP63, CDK5RAP2 and WDR62 through a stepwise assembled complex at the centrosome that recruits CDK2 required for centriole duplication. Acts as a molecular scaffold facilitating the interaction of PLK4 and CPAP, 2 molecules involved in centriole formation. Proposed to snatch PLK4 away from PLK4:CEP92 complexes in early G1 daughter centriole and to reposition PLK4 at the outer boundary of a newly forming CEP152 ring structure. Also plays a key role in deuterosome-mediated centriole amplification in multiciliated that can generate more than 100 centrioles. Overexpression of cep152 can drive amplification of centrioles. The chain is Centrosomal protein of 152 kDa (Cep152) from Mus musculus (Mouse).